The sequence spans 145 residues: Small t antigen (145 aa).

The 77-residue stretch at 6–82 (RLTELLCLPV…PEESGYATFE (77 aa)) folds into the J domain. Positions 58-80 (EGLRADETLEDSDPEPEESGYAT) are disordered. Positions 65–75 (TLEDSDPEPEE) are enriched in acidic residues.

In terms of assembly, interacts with host PPP2R1A; the interaction inhibits PP2A activity.

It is found in the host cytoplasm. The protein resides in the host nucleus. Functionally, promotes efficient viral genome replication by accelerating both G1 and S phase progression of the cell cycle. In Budgerigar fledgling disease virus (BFPyV), this protein is Small t antigen.